A 379-amino-acid chain; its full sequence is Anhydro-N-acetylmuramic acid kinase (379 aa).

Position 9 to 16 (9 to 16 (GTSADGVD)) interacts with ATP.

This sequence belongs to the anhydro-N-acetylmuramic acid kinase family.

It catalyses the reaction 1,6-anhydro-N-acetyl-beta-muramate + ATP + H2O = N-acetyl-D-muramate 6-phosphate + ADP + H(+). Its pathway is amino-sugar metabolism; 1,6-anhydro-N-acetylmuramate degradation. It participates in cell wall biogenesis; peptidoglycan recycling. Functionally, catalyzes the specific phosphorylation of 1,6-anhydro-N-acetylmuramic acid (anhMurNAc) with the simultaneous cleavage of the 1,6-anhydro ring, generating MurNAc-6-P. Is required for the utilization of anhMurNAc either imported from the medium or derived from its own cell wall murein, and thus plays a role in cell wall recycling. This Parasynechococcus marenigrum (strain WH8102) protein is Anhydro-N-acetylmuramic acid kinase.